Here is a 274-residue protein sequence, read N- to C-terminus: Large ribosomal subunit protein uL2 (274 aa).

The segment at 222 to 274 (GVAMNPVDHPHGGGEGRGKGHHPQSPWGQLAKGYKTRRGKKASDKLIVRRRNG) is disordered. Over residues 229–239 (DHPHGGGEGRG) the composition is skewed to basic and acidic residues.

Belongs to the universal ribosomal protein uL2 family. As to quaternary structure, part of the 50S ribosomal subunit. Forms a bridge to the 30S subunit in the 70S ribosome.

In terms of biological role, one of the primary rRNA binding proteins. Required for association of the 30S and 50S subunits to form the 70S ribosome, for tRNA binding and peptide bond formation. It has been suggested to have peptidyltransferase activity; this is somewhat controversial. Makes several contacts with the 16S rRNA in the 70S ribosome. The protein is Large ribosomal subunit protein uL2 of Thermosipho africanus (strain TCF52B).